The chain runs to 439 residues: Histidinol dehydrogenase (439 aa).

NAD(+) is bound by residues Tyr125, Gln187, and Asn210. The substrate site is built by Thr233, Gln255, and His258. Residues Gln255 and His258 each contribute to the Zn(2+) site. Active-site proton acceptor residues include Glu323 and His324. Residues His324, Asp357, Glu411, and His416 each coordinate substrate. Asp357 is a binding site for Zn(2+). Residue His416 participates in Zn(2+) binding.

The protein belongs to the histidinol dehydrogenase family. Zn(2+) serves as cofactor.

It catalyses the reaction L-histidinol + 2 NAD(+) + H2O = L-histidine + 2 NADH + 3 H(+). It functions in the pathway amino-acid biosynthesis; L-histidine biosynthesis; L-histidine from 5-phospho-alpha-D-ribose 1-diphosphate: step 9/9. Functionally, catalyzes the sequential NAD-dependent oxidations of L-histidinol to L-histidinaldehyde and then to L-histidine. The chain is Histidinol dehydrogenase from Symbiobacterium thermophilum (strain DSM 24528 / JCM 14929 / IAM 14863 / T).